The primary structure comprises 485 residues: N-succinylglutamate 5-semialdehyde dehydrogenase (485 aa).

Residue 220 to 225 (GSANTG) coordinates NAD(+). Active-site residues include E243 and C278.

This sequence belongs to the aldehyde dehydrogenase family. AstD subfamily.

It carries out the reaction N-succinyl-L-glutamate 5-semialdehyde + NAD(+) + H2O = N-succinyl-L-glutamate + NADH + 2 H(+). Its pathway is amino-acid degradation; L-arginine degradation via AST pathway; L-glutamate and succinate from L-arginine: step 4/5. Its function is as follows. Catalyzes the NAD-dependent reduction of succinylglutamate semialdehyde into succinylglutamate. The protein is N-succinylglutamate 5-semialdehyde dehydrogenase of Aliivibrio salmonicida (strain LFI1238) (Vibrio salmonicida (strain LFI1238)).